A 100-amino-acid polypeptide reads, in one-letter code: Protein RADIALIS-like 1 (100 aa).

Residues 9-64 (QSSGSWTAKQNKAFEQALATYDQDTPNRWQNVAKVVGGKTTEEVKRHYELLVQDIN) enclose the SANT domain. A disordered region spans residues 73 to 100 (FPNYRTSGGCTNGRLSQEEKRMRNMRLQ). Residues 76–87 (YRTSGGCTNGRL) show a composition bias toward polar residues.

Its subcellular location is the nucleus. Functionally, probable transcription factor. The chain is Protein RADIALIS-like 1 (RL1) from Arabidopsis thaliana (Mouse-ear cress).